The sequence spans 3779 residues: Protein DDB_G0268328 (3779 aa).

Disordered stretches follow at residues 24–56 (RQIK…KDGS), 1001–1028 (HEDE…DDDD), 1137–1165 (QDST…QQQQ), 1513–1538 (PTNS…SLLS), 1656–1690 (ETTV…NNKE), 2027–2054 (SNSS…DSNN), 2144–2184 (NNNN…NNSS), 2280–2325 (ISTT…NEQQ), 2508–2527 (QINN…REEG), 2720–2748 (DGNN…NDSS), 2975–3030 (ESND…DSIK), and 3427–3450 (QSNT…SGKL). Low complexity-rich tracts occupy residues 26 to 56 (IKSQ…KDGS), 1011 to 1020 (DNSNNSNSQD), 1149 to 1165 (YYHQ…QQQQ), and 1515 to 1538 (NSIY…SLLS). The segment covering 1656–1671 (ETTVLEKETKETKDNN) has biased composition (basic and acidic residues). The span at 1672–1687 (LENNNNNTNNSNNNNN) shows a compositional bias: low complexity. Composition is skewed to low complexity over residues 2144 to 2182 (NNNN…NNNN) and 2285 to 2322 (NNNN…NNNN). 2 stretches are compositionally biased toward low complexity: residues 2722-2745 (NNNN…QNNN) and 3015-3030 (SVNN…DSIK). The span at 3433–3446 (GTGGGGGNGGGNNG) shows a compositional bias: gly residues.

In Dictyostelium discoideum (Social amoeba), this protein is Protein DDB_G0268328.